The following is a 124-amino-acid chain: Large ribosomal subunit protein bL19 (124 aa).

This sequence belongs to the bacterial ribosomal protein bL19 family.

Its function is as follows. This protein is located at the 30S-50S ribosomal subunit interface and may play a role in the structure and function of the aminoacyl-tRNA binding site. The polypeptide is Large ribosomal subunit protein bL19 (Dinoroseobacter shibae (strain DSM 16493 / NCIMB 14021 / DFL 12)).